Consider the following 518-residue polypeptide: Protease Do-like 4, mitochondrial (518 aa).

Residues 1 to 23 constitute a mitochondrion transit peptide; it reads MLFRFLQTLARFCRFLLISVLGF. The interval 98–262 is serine protease; it reads ESGGSGFVIS…IPTPVIKHFL (165 aa). Residues H116, D147, and S225 each act as charge relay system in the active site. The PDZ domain occupies 278 to 358; that stretch reads DISYQLMENS…HFVSMKKLDE (81 aa).

This sequence belongs to the peptidase S1C family.

It localises to the mitochondrion membrane. Putative serine protease. This chain is Protease Do-like 4, mitochondrial (DEGP4), found in Arabidopsis thaliana (Mouse-ear cress).